A 321-amino-acid chain; its full sequence is Eukaryotic translation initiation factor 3 subunit I (321 aa).

WD repeat units lie at residues 8–47 (GHERNITQIKYNRMGDLLFSAAKDTRPTVWYSLNGERLGT), 50–89 (GHGGAVWCIDVNYDTTQFISGGADNCLRLWDCEKGVTLSK), 140–179 (VDNSKVTAGLWGPLDQFLVTGHENGELCQWDVKSGNKLIS), 182–221 (EHSKQINDIQMYKDSTMFVTASKDTTAKLFDTDSLRHLKT), and 279–318 (GHFGPINSLAFHPDGRSYSSGGEDGYVRIHSFDPSYDDIE).

The protein belongs to the eIF-3 subunit I family. In terms of assembly, component of the eukaryotic translation initiation factor 3 (eIF-3) complex.

The protein resides in the cytoplasm. Its function is as follows. Component of the eukaryotic translation initiation factor 3 (eIF-3) complex, which is involved in protein synthesis of a specialized repertoire of mRNAs and, together with other initiation factors, stimulates binding of mRNA and methionyl-tRNAi to the 40S ribosome. The eIF-3 complex specifically targets and initiates translation of a subset of mRNAs involved in cell proliferation. In Nematostella vectensis (Starlet sea anemone), this protein is Eukaryotic translation initiation factor 3 subunit I.